A 699-amino-acid chain; its full sequence is Pollen-specific leucine-rich repeat extensin-like protein 4 (699 aa).

The first 39 residues, 1-39 (MPFYKQPWVFSKVFVLAMAKPPSFGCCFFLLFFSFLSSS), serve as a signal peptide directing secretion. Asn-106 carries an N-linked (GlcNAc...) asparagine glycan. LRR repeat units lie at residues 133–157 (VTVV…LGLM), 158–180 (TDVA…SFEK), 182–205 (KLMH…VLSW), 206–229 (PDVK…LFKK), 231–251 (LDAI…SLGE), 253–275 (PASV…IGNM), 276–299 (KNLN…IGKL), 301–323 (NVTV…FVGL), and 324–347 (TSVE…ICQL). An N-linked (GlcNAc...) asparagine glycan is attached at Asn-301. Asn-352 carries N-linked (GlcNAc...) asparagine glycosylation. Residues 411-699 (KCAGGSSTPS…SPPPPMFAGY (289 aa)) are disordered. 4 stretches are compositionally biased toward pro residues: residues 421 to 466 (KPSP…PVPT), 482 to 504 (KPSP…PQPD), 518 to 659 (PPPA…PPAP), and 690 to 699 (SPPPPMFAGY). The interval 517 to 699 (SPPPAPVNSP…SPPPPMFAGY (183 aa)) is contains the Ser-Pro(4) repeats.

In terms of processing, hydroxylated on proline residues in the S-P-P-P-P repeat. Post-translationally, O-glycosylated on hydroxyprolines. As to expression, expressed in flowers, stamen, pollen, and pollinated carpels.

Its subcellular location is the secreted. It localises to the cell wall. Its function is as follows. Modulates cell morphogenesis by regulating cell wall formation and assembly, and/or growth polarization. The protein is Pollen-specific leucine-rich repeat extensin-like protein 4 (PEX4) of Arabidopsis thaliana (Mouse-ear cress).